A 475-amino-acid chain; its full sequence is Enolase (475 aa).

Q179 provides a ligand contact to (2R)-2-phosphoglycerate. Residue E221 is the Proton donor of the active site. Residues D258, E312, and D339 each coordinate Mg(2+). K364, R393, S394, and K415 together coordinate (2R)-2-phosphoglycerate. The active-site Proton acceptor is the K364. A disordered region spans residues 454–475 (STPAATPKKSPAKKTTKAKSKK). Basic residues predominate over residues 463–475 (SPAKKTTKAKSKK).

The protein belongs to the enolase family. Mg(2+) serves as cofactor.

The protein resides in the cell membrane. It localises to the cytoplasm. It is found in the secreted. Its subcellular location is the cell surface. It carries out the reaction (2R)-2-phosphoglycerate = phosphoenolpyruvate + H2O. Its pathway is carbohydrate degradation; glycolysis; pyruvate from D-glyceraldehyde 3-phosphate: step 4/5. In terms of biological role, catalyzes the reversible conversion of 2-phosphoglycerate (2-PG) into phosphoenolpyruvate (PEP). It is essential for the degradation of carbohydrates via glycolysis. Functionally, 'Moonlights' as a plasminogen receptor. Binds host (chicken) plasminogen; enolase antiserum inhibits M.gallisepticum adherence to chicken embryo fibroblasts. This is Enolase from Mycoplasmoides gallisepticum (strain R(low / passage 15 / clone 2)) (Mycoplasma gallisepticum).